Consider the following 348-residue polypeptide: tRNA pseudouridine synthase B (348 aa).

D52 (nucleophile) is an active-site residue.

The protein belongs to the pseudouridine synthase TruB family. Type 1 subfamily.

It carries out the reaction uridine(55) in tRNA = pseudouridine(55) in tRNA. Its function is as follows. Responsible for synthesis of pseudouridine from uracil-55 in the psi GC loop of transfer RNAs. The protein is tRNA pseudouridine synthase B of Rhodopirellula baltica (strain DSM 10527 / NCIMB 13988 / SH1).